A 345-amino-acid chain; its full sequence is UDP-N-acetylenolpyruvoylglucosamine reductase (345 aa).

The region spanning 59-254 (VGGPAACLAR…RKATQPLGRP (196 aa)) is the FAD-binding PCMH-type domain. R209 is a catalytic residue. C258 functions as the Proton donor in the catalytic mechanism. E328 is an active-site residue.

Belongs to the MurB family. Requires FAD as cofactor.

The protein resides in the cytoplasm. The enzyme catalyses UDP-N-acetyl-alpha-D-muramate + NADP(+) = UDP-N-acetyl-3-O-(1-carboxyvinyl)-alpha-D-glucosamine + NADPH + H(+). It functions in the pathway cell wall biogenesis; peptidoglycan biosynthesis. In terms of biological role, cell wall formation. This is UDP-N-acetylenolpyruvoylglucosamine reductase from Syntrophobacter fumaroxidans (strain DSM 10017 / MPOB).